A 372-amino-acid chain; its full sequence is C-X-C chemokine receptor type 5 (372 aa).

Topologically, residues 1-55 (MNYPLTLEMDLENLEDLFWELDRLDNYNDTSLVENHLCPATEGPLMASFKAVFVP) are extracellular. N-linked (GlcNAc...) asparagine glycosylation occurs at Asn-28. Residues 56–76 (VAYSLIFLLGVIGNVLVLVIL) form a helical membrane-spanning segment. Residues 77-88 (ERHRQTRSSTET) lie on the Cytoplasmic side of the membrane. A helical membrane pass occupies residues 89–109 (FLFHLAVADLLLVFILPFAVA). At 110–124 (EGSVGWVLGTFLCKT) the chain is on the extracellular side. Residues Cys-122 and Cys-202 are joined by a disulfide bond. The helical transmembrane segment at 125 to 145 (VIALHKVNFYCSSLLLACIAV) threads the bilayer. The Cytoplasmic portion of the chain corresponds to 146 to 167 (DRYLAIVHAVHAYRHRRLLSIH). A helical membrane pass occupies residues 168-188 (ITCGTIWLVGFLLALPEILFA). The Extracellular segment spans residues 189 to 219 (KVSQGHHNNSLPRCTFSQENQAETHAWFTSR). N-linked (GlcNAc...) asparagine glycosylation is present at Asn-196. Residues 220-240 (FLYHVAGFLLPMLVMGWCYVG) traverse the membrane as a helical segment. Topologically, residues 241–259 (VVHRLRQAQRRPQRQKAVR) are cytoplasmic. Residues 260 to 280 (VAILVTSIFFLCWSPYHIVIF) form a helical membrane-spanning segment. Residues 281 to 304 (LDTLARLKAVDNTCKLNGSLPVAI) are Extracellular-facing. A helical membrane pass occupies residues 305-325 (TMCEFLGLAHCCLNPMLYTFA). Over 326-372 (GVKFRSDLSRLLTKLGCTGPASLCQLFPSWRRSSLSESENATSLTTF) the chain is Cytoplasmic.

Belongs to the G-protein coupled receptor 1 family. Expression in mature B-cells and Burkitt lymphoma cells.

The protein resides in the cell membrane. Functionally, cytokine receptor that binds to B-lymphocyte chemoattractant (BLC). Involved in B-cell migration into B-cell follicles of spleen and Peyer patches but not into those of mesenteric or peripheral lymph nodes. May have a regulatory function in Burkitt lymphoma (BL) lymphomagenesis and/or B-cell differentiation. The polypeptide is C-X-C chemokine receptor type 5 (CXCR5) (Homo sapiens (Human)).